The primary structure comprises 892 residues: Alanine--tRNA ligase (892 aa).

Residues His565, His569, Cys675, and His679 each contribute to the Zn(2+) site. The interval 852 to 871 is disordered; that stretch reads MGGKGGGGRPDMAQAGGPEA.

The protein belongs to the class-II aminoacyl-tRNA synthetase family. Zn(2+) is required as a cofactor.

The protein localises to the cytoplasm. It carries out the reaction tRNA(Ala) + L-alanine + ATP = L-alanyl-tRNA(Ala) + AMP + diphosphate. In terms of biological role, catalyzes the attachment of alanine to tRNA(Ala) in a two-step reaction: alanine is first activated by ATP to form Ala-AMP and then transferred to the acceptor end of tRNA(Ala). Also edits incorrectly charged Ser-tRNA(Ala) and Gly-tRNA(Ala) via its editing domain. The sequence is that of Alanine--tRNA ligase from Parvibaculum lavamentivorans (strain DS-1 / DSM 13023 / NCIMB 13966).